Here is a 1730-residue protein sequence, read N- to C-terminus: SH3 and multiple ankyrin repeat domains protein 3 (1730 aa).

An intramolecular interaction with the ANK repeats region spans residues 1–75 (MDGPGASAVV…KFLDEERLLQ (75 aa)). Tyr-122 carries the post-translational modification Phosphotyrosine. ANK repeat units follow at residues 148–178 (SGEC…HLDF), 182–211 (DGLT…SPDY), 215–245 (RGLT…QLGT), 249–278 (NGWQ…NMGA), 282–311 (SGNT…NKDV), and 315–345 (NSQT…DVVP). Residues 354 to 466 (KRRRLAGPSG…PPPRGPKRKL (113 aa)) are disordered. Phosphoserine is present on residues Ser-373, Ser-375, Ser-387, and Ser-394. The segment covering 404–415 (LQEEKDRDRDGE) has biased composition (basic and acidic residues). Positions 444 to 460 (APGPGPASPAPPAPPPR) are enriched in pro residues. The 60-residue stretch at 470–529 (VPGRKFIAVKAHSPQGEGEIPLHRGEAVKVLSIGEGGFWEGTVKGRTGWFPADCVEEVQM) folds into the SH3 domain. A Phosphoserine modification is found at Ser-482. Tyr-555 carries the post-translational modification Phosphotyrosine. The PDZ domain occupies 570–664 (VAILQKRDHE…RLVMKVVSVT (95 aa)). The disordered stretch occupies residues 664-688 (TRKPEEDGARRRAPPPPKRAPSTTL). The segment at 677 to 684 (PPPPKRAP) is required for interaction with ABI1. Phosphoserine occurs at positions 694, 781, 790, and 801. 2 disordered regions span residues 760–1460 (QGLP…AAGP) and 1475–1524 (GDPV…SLLD). A compositionally biased stretch (pro residues) spans 812-844 (IPPPPQTAPPPPPAPYYFDSGPPPTFSPPPPPG). The segment covering 857–869 (GLEARLGAGAAGL) has biased composition (low complexity). A phosphoserine mark is found at Ser-890 and Ser-897. Phosphothreonine is present on Thr-912. A Phosphotyrosine modification is found at Tyr-930. Arg-965 bears the Asymmetric dimethylarginine mark. Ser-995 is subject to Phosphoserine. Basic and acidic residues predominate over residues 1016-1026 (VKERRLEERRR). Positions 1078-1092 (LKPLVGGPSLGPSGS) are enriched in low complexity. Residues 1122–1131 (SQTPSRSPTP) show a composition bias toward polar residues. Thr-1130 bears the Phosphothreonine mark. A phosphoserine mark is found at Ser-1134, Ser-1159, Ser-1163, and Ser-1166. The segment covering 1174–1194 (ARREAEKPPREERKSPEDKKS) has biased composition (basic and acidic residues). Phosphothreonine is present on Thr-1234. The span at 1235-1250 (PELAPAPMQAAAVAEP) shows a compositional bias: low complexity. Composition is skewed to pro residues over residues 1251–1261 (MPSPRAQPPGS) and 1321–1333 (TPPP…PTTV). Phosphoserine is present on Ser-1253. Positions 1360-1370 (ADTRSSSDPHL) are enriched in basic and acidic residues. Over residues 1371–1392 (ETTSTISTVSSMSTLSSESGEL) the composition is skewed to low complexity. The SH3-binding signature appears at 1410 to 1416 (PPVPPKP). Ser-1420 is subject to Phosphoserine. The stretch at 1494–1514 (ISELSSRLQQLNKDTRSLGEE) forms a coiled coil. The segment covering 1495–1505 (SELSSRLQQLN) has biased composition (polar residues). Residues Ser-1510, Ser-1521, Ser-1529, and Ser-1539 each carry the phosphoserine modification. Disordered stretches follow at residues 1546 to 1584 (ISAQ…PASL) and 1627 to 1663 (VRSV…QQKP). The span at 1627–1637 (VRSVSARSRSP) shows a compositional bias: low complexity. Residues Ser-1634, Ser-1636, and Ser-1638 each carry the phosphoserine modification. Pro residues predominate over residues 1638–1648 (SPSPLPSPSPG). The span at 1649-1658 (SGPSAGPRRP) shows a compositional bias: low complexity. The region spanning 1667–1730 (WSKFDVGDWL…ERALRQLDGS (64 aa)) is the SAM domain.

The protein belongs to the SHANK family. In terms of assembly, may homomultimerize via its SAM domain. Interacts with BAIAP2, DBNL and SLC17A7/VGLUT1. Interacts with DLGAP1/GKAP, GRM1/MGLUR1, GRM5/MGLUR5 and LZTS3 C-termini via its PDZ domain. Interacts with ABI1, HOMER1, HOMER2, HOMER3 and CTTN/cortactin SH3 domain. Is part of a complex with DLG4/PSD-95 and DLGAP1/GKAP. Interacts (via PDZ domain) with the GRIA1 subunit of the AMPA receptor (via PDZ-binding motif). Interacts with WASF1 and CYFIP2; the interactions mediate the association of SHANK3 with the WAVE1 complex. Interacts with ARPC2; the interaction probably mediates the association of SHANK3 with the Arp2/3 complex. Interacts (via ANK repeats) with SHARPIN and SPTAN1. Interacts (via PDZ domain) with ARHGAP44 (probably via PDZ-binding motif); the interaction takes place in dendritic spines and promotes GRIA1 exocytosis. Interacts with CAMK2A. Interacts with DIP2A. Interacts with ADGRL3. In brain, highly expressed in striatum, thalamus, hippocampus and granule cells of the cerebellum.

Its subcellular location is the cytoplasm. The protein localises to the synapse. It is found in the postsynaptic density. The protein resides in the cell projection. It localises to the dendritic spine. Its function is as follows. Major scaffold postsynaptic density protein which interacts with multiple proteins and complexes to orchestrate the dendritic spine and synapse formation, maturation and maintenance. Interconnects receptors of the postsynaptic membrane including NMDA-type and metabotropic glutamate receptors via complexes with GKAP/PSD-95 and HOMER, respectively, and the actin-based cytoskeleton. Plays a role in the structural and functional organization of the dendritic spine and synaptic junction through the interaction with Arp2/3 and WAVE1 complex as well as the promotion of the F-actin clusters. By way of this control of actin dynamics, participates in the regulation of developing neurons growth cone motility and the NMDA receptor-signaling. Also modulates GRIA1 exocytosis and GRM5/MGLUR5 expression and signaling to control the AMPA and metabotropic glutamate receptor-mediated synaptic transmission and plasticity. May be required at an early stage of synapse formation and be inhibited by IGF1 to promote synapse maturation. This is SH3 and multiple ankyrin repeat domains protein 3 (Shank3) from Mus musculus (Mouse).